We begin with the raw amino-acid sequence, 323 residues long: GTP 3',8-cyclase (323 aa).

Residues 4–226 (TFQRQINYLR…LEPFPDLATN (223 aa)) form the Radical SAM core domain. Position 13 (arginine 13) interacts with GTP. Residues cysteine 20 and cysteine 24 each coordinate [4Fe-4S] cluster. Tyrosine 26 lines the S-adenosyl-L-methionine pocket. Cysteine 27 is a [4Fe-4S] cluster binding site. Arginine 63 lines the GTP pocket. S-adenosyl-L-methionine is bound at residue glycine 67. Residue threonine 94 participates in GTP binding. Residue serine 118 coordinates S-adenosyl-L-methionine. A GTP-binding site is contributed by lysine 155. Methionine 189 lines the S-adenosyl-L-methionine pocket. Positions 252 and 255 each coordinate [4Fe-4S] cluster. 257–259 (RLR) contributes to the GTP binding site. Cysteine 269 is a [4Fe-4S] cluster binding site.

It belongs to the radical SAM superfamily. MoaA family. Monomer and homodimer. [4Fe-4S] cluster serves as cofactor.

It carries out the reaction GTP + AH2 + S-adenosyl-L-methionine = (8S)-3',8-cyclo-7,8-dihydroguanosine 5'-triphosphate + 5'-deoxyadenosine + L-methionine + A + H(+). Its pathway is cofactor biosynthesis; molybdopterin biosynthesis. Catalyzes the cyclization of GTP to (8S)-3',8-cyclo-7,8-dihydroguanosine 5'-triphosphate. The polypeptide is GTP 3',8-cyclase (Moorella thermoacetica (strain ATCC 39073 / JCM 9320)).